We begin with the raw amino-acid sequence, 970 residues long: Probable histidine kinase 6 (970 aa).

Residues 1-12 (MGKPEARSGWRN) are Cytoplasmic-facing. Residues 13-33 (AAAAAWVLVAVACAAYMHWHL) traverse the membrane as a helical segment. Topologically, residues 34-306 (RRETMDRAEE…YRQKPPLPWS (273 aa)) are extracellular. The CHASE domain maps to 82–294 (FPSAIDQDTF…GDPFRAHEMR (213 aa)). Residues 307 to 327 (AITNPLGTFVIWMLVGYIICA) form a helical membrane-spanning segment. Over 328–970 (AWSRYDKVSE…LVVGTKESAV (643 aa)) the chain is Cytoplasmic. Positions 362-651 (TVSHEIRTPM…TFTFSAVLKR (290 aa)) constitute a Histidine kinase domain. His365 bears the Phosphohistidine; by autocatalysis mark. 2 consecutive Response regulatory domains span residues 676–802 (KAIL…QQLL) and 827–962 (NILI…SRLV). 4-aspartylphosphate is present on Asp877.

Post-translationally, activation probably requires a transfer of a phosphate group between a His in the transmitter domain and an Asp of the receiver domain. In terms of tissue distribution, highly expressed in spikelets and at lower levels in roots, young leaves, mature leaves and stems.

The protein resides in the cell membrane. It catalyses the reaction ATP + protein L-histidine = ADP + protein N-phospho-L-histidine.. In terms of biological role, cytokinin receptor related to bacterial two-component regulators. Functions as a histidine kinase and transmits the stress signal to a downstream MAPK cascade. This Oryza sativa subsp. japonica (Rice) protein is Probable histidine kinase 6.